The sequence spans 585 residues: Frizzled-5 (585 aa).

The first 26 residues, Met1 to Ala26, serve as a signal peptide directing secretion. Residues Ala27–Trp238 lie on the Extracellular side of the membrane. The FZ domain occupies Ser28–Tyr150. 5 disulfide bridges follow: Cys33-Cys94, Cys41-Cys87, Cys78-Cys116, Cys105-Cys147, and Cys109-Cys133. Residue Asn47 is glycosylated (N-linked (GlcNAc...) asparagine). A glycan (N-linked (GlcNAc...) asparagine) is linked at Asn151. The segment at Thr156 to Cys182 is disordered. The chain crosses the membrane as a helical span at residues Ile239–Ile259. Over Asp260–Pro270 the chain is Cytoplasmic. A helical membrane pass occupies residues Ile271–Val291. Residues Gly292–Cys315 lie on the Extracellular side of the membrane. Residues Thr316–Leu336 form a helical membrane-spanning segment. Residues Ser337 to Gln358 lie on the Cytoplasmic side of the membrane. A helical transmembrane segment spans residues Tyr359 to Ser379. Residues Ser380 to Gly402 lie on the Extracellular side of the membrane. A helical membrane pass occupies residues Phe403–Phe423. Residues Val424–Arg449 are Cytoplasmic-facing. The chain crosses the membrane as a helical span at residues Ile450–Tyr470. Residues Glu471–Tyr500 lie on the Extracellular side of the membrane. A helical transmembrane segment spans residues Trp501–Ile521. The Cytoplasmic portion of the chain corresponds to Trp522–Val585. The PDZ-binding signature appears at Leu582–His584.

This sequence belongs to the G-protein coupled receptor Fz/Smo family. In terms of assembly, binding of unsaturated fatty acid molecules (via FZ domain) promotes homodimerization (via FZ domain). Interacts with WNT2B. Interacts with WNT7A. Interacts with GOPC. Post-translationally, ubiquitinated by RNF43 and ZNRF3, leading to its degradation by the proteasome. Detected in hippocampus (at protein level). Expressed in eye, kidney, lung, chondrocytes, epithelial cells of the small intestine and gobelet cells of the colon.

It localises to the cell membrane. The protein resides in the golgi apparatus membrane. It is found in the synapse. Its subcellular location is the perikaryon. The protein localises to the cell projection. It localises to the dendrite. The protein resides in the axon. In terms of biological role, receptor for Wnt proteins. Functions in the canonical Wnt/beta-catenin signaling pathway. In vitro activates WNT2, WNT10B, WNT5A, but not WNT2B or WNT4 signaling. In neurons, activation by WNT7A promotes formation of synapses. May be involved in transduction and intercellular transmission of polarity information during tissue morphogenesis and/or in differentiated tissues. Plays a role in yolk sac angiogenesis and in placental vascularization. Plays a role in ocular development. The chain is Frizzled-5 (Fzd5) from Mus musculus (Mouse).